The following is a 761-amino-acid chain: Hyperosmolality-gated Ca2+ permeable channel 1.6 (761 aa).

Helical transmembrane passes span 7–27 (IGVA…AFAI), 101–121 (IYLL…TTMV), 156–176 (PRFW…CFIL), 375–395 (LIVG…IAFV), 419–439 (LLKS…FLLF), 467–487 (FYMF…TAFQ), 512–532 (ATFF…GEIL), 583–603 (AAVS…AFVV), 630–650 (VVTA…TKHA), and 653–673 (STPL…HCKN). Over residues 718–731 (RVGEDPEPEEKLES) the composition is skewed to basic and acidic residues. Residues 718-761 (RVGEDPEPEEKLESDMSPPDLVATKRWSWRNTPLPSKDSCREIP) are disordered.

Belongs to the CSC1 (TC 1.A.17) family.

Its subcellular location is the membrane. Acts as an osmosensitive calcium-permeable cation channel. The polypeptide is Hyperosmolality-gated Ca2+ permeable channel 1.6 (Arabidopsis thaliana (Mouse-ear cress)).